The sequence spans 463 residues: V-type proton ATPase subunit S1 (463 aa).

A signal peptide spans 1–32; it reads MMAATVVSRIRTGTRWAPVLWLLLSLVAVAAA. The propeptide occupies 33–225; the sequence is VAAEQQVPLV…TAVRPSRVAR (193 aa). Residues 33 to 412 lie on the Lumenal side of the membrane; it reads VAAEQQVPLV…EQFSYASDCA (380 aa). 8 N-linked (GlcNAc...) asparagine glycosylation sites follow: Asn-164, Asn-255, Asn-267, Asn-290, Asn-297, Asn-344, Asn-351, and Asn-399. A helical membrane pass occupies residues 413–433; that stretch reads GFFSPGIWMGLLTTLFMLFIF. Residues 434-463 lie on the Cytoplasmic side of the membrane; that stretch reads TYGLHMILSLKTMDRFDDRKGPTITLTQIV.

This sequence belongs to the vacuolar ATPase subunit S1 family. Accessory component of the multisubunit proton-transporting vacuolar (V)-ATPase protein pump. Interacts (via N-terminus) with ATP6AP2 (via N-terminus). Interacts with RNASEK. Interacts with TMEM106B (via C-terminus). N-glycosylated. Expressed in brain (at protein level).

The protein localises to the endoplasmic reticulum membrane. It is found in the endoplasmic reticulum-Golgi intermediate compartment membrane. Its subcellular location is the cytoplasmic vesicle. It localises to the secretory vesicle. The protein resides in the synaptic vesicle membrane. The protein localises to the clathrin-coated vesicle membrane. Accessory subunit of the proton-transporting vacuolar (V)-ATPase protein pump, which is required for luminal acidification of secretory vesicles. Guides the V-type ATPase into specialized subcellular compartments, such as neuroendocrine regulated secretory vesicles or the ruffled border of the osteoclast, thereby regulating its activity. Involved in membrane trafficking and Ca(2+)-dependent membrane fusion. May play a role in the assembly of the V-type ATPase complex. In aerobic conditions, involved in intracellular iron homeostasis, thus triggering the activity of Fe(2+) prolyl hydroxylase (PHD) enzymes, and leading to HIF1A hydroxylation and subsequent proteasomal degradation. In islets of Langerhans cells, may regulate the acidification of dense-core secretory granules. This Rattus norvegicus (Rat) protein is V-type proton ATPase subunit S1 (Atp6ap1).